The sequence spans 311 residues: 3'(2'),5'-bisphosphate nucleotidase 1 (311 aa).

Aspartate 49 serves as the catalytic Proton acceptor. The Mg(2+) site is built by glutamate 72, aspartate 116, leucine 118, and aspartate 119. Threonine 121 functions as the Proton acceptor in the catalytic mechanism. 4 residues coordinate AMP: threonine 202, histidine 205, glycine 227, and lysine 231. Residue aspartate 254 coordinates Mg(2+).

It belongs to the inositol monophosphatase superfamily. Mg(2+) serves as cofactor.

It catalyses the reaction adenosine 3',5'-bisphosphate + H2O = AMP + phosphate. It carries out the reaction adenosine 2',5'-bisphosphate + H2O = AMP + phosphate. The enzyme catalyses 3'-phosphoadenylyl sulfate + H2O = adenosine 5'-phosphosulfate + phosphate. The catalysed reaction is 1D-myo-inositol 1,4-bisphosphate + H2O = 1D-myo-inositol 4-phosphate + phosphate. It catalyses the reaction 1D-myo-inositol 1,3,4-trisphosphate + H2O = 1D-myo-inositol 3,4-bisphosphate + phosphate. With respect to regulation, inhibited by Li(+) and Ca(2+), but not by Na(+). Functionally, phosphatase that converts 3'(2')-phosphoadenosine 5'-phosphate (PAP) to AMP and adenosine 3'-phosphate 5'-phosphosulfate (PAPS) to adenosine 5'-phosphosulfate (APS). Is also able to hydrolyze inositol 1,4-bisphosphate (Ins(1,4)P2) and inositol 1,3,4-trisphosphate (Ins(1,3,4)P3), but is not active on AMP, 3'-AMP, fructose-1,6-bisphosphate, Ins(1)P, Ins(2)P and Ins(1,4,5)P3. Probably prevents the toxic accumulation of PAP, a compound which inhibits a variety of proteins, including PAPS-utilizing enzymes such as sulfotransferases, and RNA processing enzymes. Could also play a role in inositol recycling and phosphoinositide metabolism. The protein is 3'(2'),5'-bisphosphate nucleotidase 1 (bpnt1) of Dictyostelium discoideum (Social amoeba).